Here is a 181-residue protein sequence, read N- to C-terminus: Transmembrane protein 47 (181 aa).

N-acetylalanine is present on A2. Helical transmembrane passes span 21-41 (LVGLVCIFLALCLDLGAVLSP), 83-103 (ALLLGGAAIILIAFLVGLISI), 115-135 (VAVMLFAAVVLQVCSLVLYPI), and 152-172 (GYGLAWGATIFSFGGAILYCL).

Belongs to the TMEM47 family. As to quaternary structure, interacts with CTNNB1, CTNNA1, PRKCI, PARD6B, FYB1. Expressed in adult brain, fetal brain, cerebellum, heart, lung, prostate and thyroid.

The protein localises to the membrane. The protein resides in the cell junction. Its subcellular location is the adherens junction. Functionally, regulates cell junction organization in epithelial cells. May play a role in the transition from adherens junction to tight junction assembly. May regulate F-actin polymerization required for tight junctional localization dynamics and affect the junctional localization of PARD6B. During podocyte differentiation may negatively regulate activity of FYN and subsequently the abundance of nephrin. In Homo sapiens (Human), this protein is Transmembrane protein 47 (TMEM47).